The following is a 126-amino-acid chain: Small ribosomal subunit protein uS8 (126 aa).

This sequence belongs to the universal ribosomal protein uS8 family. In terms of assembly, part of the 30S ribosomal subunit. Contacts proteins S5 and S12.

One of the primary rRNA binding proteins, it binds directly to 16S rRNA central domain where it helps coordinate assembly of the platform of the 30S subunit. The protein is Small ribosomal subunit protein uS8 of Lawsonia intracellularis (strain PHE/MN1-00).